Consider the following 24-residue polypeptide: MTTRGFSCLLLLIREIDLSAKRRI.

It belongs to the humanin family. As to expression, expressed in mature brain, thyroid gland and testis.

The protein resides in the secreted. Its subcellular location is the cytoplasm. Functionally, plays a role as a neuroprotective and antiapoptotic factor. This is Humanin-like 10 from Homo sapiens (Human).